A 415-amino-acid chain; its full sequence is Serine hydroxymethyltransferase (415 aa).

Residues Leu-121 and 125 to 127 each bind (6S)-5,6,7,8-tetrahydrofolate; that span reads GHL. Lys-230 carries the post-translational modification N6-(pyridoxal phosphate)lysine. (6S)-5,6,7,8-tetrahydrofolate is bound by residues Glu-246 and 354-356; that span reads SPF.

Belongs to the SHMT family. Homodimer. Requires pyridoxal 5'-phosphate as cofactor.

It is found in the cytoplasm. It carries out the reaction (6R)-5,10-methylene-5,6,7,8-tetrahydrofolate + glycine + H2O = (6S)-5,6,7,8-tetrahydrofolate + L-serine. It functions in the pathway one-carbon metabolism; tetrahydrofolate interconversion. The protein operates within amino-acid biosynthesis; glycine biosynthesis; glycine from L-serine: step 1/1. In terms of biological role, catalyzes the reversible interconversion of serine and glycine with tetrahydrofolate (THF) serving as the one-carbon carrier. This reaction serves as the major source of one-carbon groups required for the biosynthesis of purines, thymidylate, methionine, and other important biomolecules. Also exhibits THF-independent aldolase activity toward beta-hydroxyamino acids, producing glycine and aldehydes, via a retro-aldol mechanism. This is Serine hydroxymethyltransferase from Bdellovibrio bacteriovorus (strain ATCC 15356 / DSM 50701 / NCIMB 9529 / HD100).